We begin with the raw amino-acid sequence, 295 residues long: Indole-3-glycerol phosphate synthase (295 aa).

The protein belongs to the TrpC family.

It catalyses the reaction 1-(2-carboxyphenylamino)-1-deoxy-D-ribulose 5-phosphate + H(+) = (1S,2R)-1-C-(indol-3-yl)glycerol 3-phosphate + CO2 + H2O. Its pathway is amino-acid biosynthesis; L-tryptophan biosynthesis; L-tryptophan from chorismate: step 4/5. The polypeptide is Indole-3-glycerol phosphate synthase (Prochlorococcus marinus (strain MIT 9301)).